A 148-amino-acid polypeptide reads, in one-letter code: Glutamyl-tRNA(Gln) amidotransferase subunit C, mitochondrial (148 aa).

A mitochondrion-targeting transit peptide spans 1-10 (MLRLLNKRFY).

The protein belongs to the GatC family. Subunit of the heterotrimeric GatCAB amidotransferase (AdT) complex, composed of A, B and C subunits.

It is found in the mitochondrion. It catalyses the reaction L-glutamyl-tRNA(Gln) + L-glutamine + ATP + H2O = L-glutaminyl-tRNA(Gln) + L-glutamate + ADP + phosphate + H(+). Its function is as follows. Allows the formation of correctly charged Gln-tRNA(Gln) through the transamidation of misacylated Glu-tRNA(Gln) in the mitochondria. The reaction takes place in the presence of glutamine and ATP through an activated gamma-phospho-Glu-tRNA(Gln). The chain is Glutamyl-tRNA(Gln) amidotransferase subunit C, mitochondrial from Drosophila ananassae (Fruit fly).